Reading from the N-terminus, the 542-residue chain is Chondroitin sulfate N-acetylgalactosaminyltransferase 2 (542 aa).

Residues 1-13 (MSRRGSILHSRTQ) are Cytoplasmic-facing. Residues 14 to 34 (WLLLGLALLFSLVLFMYLLEC) traverse the membrane as a helical; Signal-anchor for type II membrane protein segment. Residues 35 to 542 (APQTDGNASL…AYRTNSETAG (508 aa)) are Lumenal-facing. An N-linked (GlcNAc...) asparagine glycan is attached at asparagine 41. The stretch at 59–105 (ALLQEQEEHYQTRATSLKRQIAQLKQELQDMSEKMRALQERKKLGAN) forms a coiled coil. Residue asparagine 333 is glycosylated (N-linked (GlcNAc...) asparagine). A divalent metal cation is bound by residues aspartate 369 and histidine 486.

It belongs to the chondroitin N-acetylgalactosaminyltransferase family.

It localises to the golgi apparatus. Its subcellular location is the golgi stack membrane. The enzyme catalyses 3-O-(beta-D-GlcA-(1-&gt;3)-beta-D-Gal-(1-&gt;3)-beta-D-Gal-(1-&gt;4)-beta-D-Xyl)-L-seryl-[protein] + UDP-N-acetyl-alpha-D-galactosamine = 3-O-(beta-D-GalNAc-(1-&gt;4)-beta-D-GlcA-(1-&gt;3)-beta-D-Gal-(1-&gt;3)-beta-D-Gal-(1-&gt;4)-beta-D-Xyl)-L-seryl-[protein] + UDP + H(+). In terms of biological role, transfers 1,4-N-acetylgalactosamine (GalNAc) from UDP-GalNAc to the non-reducing end of glucuronic acid (GlcUA). Required for addition of the first GalNAc to the core tetrasaccharide linker and for elongation of chondroitin chains. This Mus musculus (Mouse) protein is Chondroitin sulfate N-acetylgalactosaminyltransferase 2 (Csgalnact2).